The primary structure comprises 125 residues: Lectin (125 aa).

In terms of domain architecture, C-type lectin spans 1–120 (MDYEILFSDE…CGGARRVICE (120 aa)). 2 cysteine pairs are disulfide-bonded: Cys21/Cys119 and Cys96/Cys111.

In terms of assembly, homodimer.

Role in the defense system of the organism against microorganisms. This calcium-binding lectin binds galactose. This Polyandrocarpa misakiensis (Tunicate) protein is Lectin.